Here is a 382-residue protein sequence, read N- to C-terminus: tRNA-queuosine alpha-mannosyltransferase (382 aa).

The protein belongs to the glycosyltransferase group 1 family. Glycosyltransferase 4 subfamily.

It is found in the cytoplasm. The protein resides in the nucleus. The enzyme catalyses queuosine(34) in tRNA(Asp) + GDP-alpha-D-mannose = O-4''-alpha-D-mannosylqueuosine(34) in tRNA(Asp) + GDP + H(+). Its function is as follows. Glycosyltransferase that specifically catalyzes mannosylation of cytoplasmic tRNA(Asp) modified with queuosine at position 34 (queuosine(34)). Mannosylates the cyclopentene moiety of queuosine(34) in tRNA(Asp) to form mannosyl-queuosine(34). Mannosylation of queuosine(34) in tRNA(Asp) is required to slow-down elongation at cognate codons, GAC and GAU, thereby regulating protein translation. This is tRNA-queuosine alpha-mannosyltransferase (GTDC1) from Gallus gallus (Chicken).